Reading from the N-terminus, the 584-residue chain is MLEKTCLEEKLDQQCSNVDNIKHTNVDIFKNESNSTVVSIPPKHSIRARKPSLHFLHSFASSGSLTYKNALRHKSCKLHLHKCKNPKKKYRQSGFRLASKGIPRSRCSKKAKKYLEDKKLMPISEVSLDPVISSNPLLRWWATSASNDSLLEELNNRFEQITNAWVQVSKDEAQNFVHKTEYTKGDHCEAASPLETCLLELEVSPVKMLFQKKYNLNELCTWFMQTTETQSLSLVRKANARNPLEVISTKGIKLGVKCCGFNASPFRKHFKKFAVSSPSKPAGKFHILHKMVGSPLLNVKSNLTLARLKRTEFKNLHCERWRREERPYSHRTVDWSSKRRNLRLFCQNPSWTNSEGQTNAETSLNGKGTVGNQWASPPEPRVTFAKKRVAVHDFRTHASLESKFNGTGGGQTDSEKEQIMESVSSHNWRSKTLKDCRIFLRKINCLEHRNTFKLNTIIYSPESVDSGGSQAQPEESKRFSLRSHSARQNSFKKQNEERANPKANSPASSRLTGELDSSHLSKHVNFDKNPDHSEALSKLSKRKRPPWKTTEMSAKRHKRQSCNSGQMANYCTKSQVGKLFSPSF.

Residues 353-375 are compositionally biased toward polar residues; the sequence is NSEGQTNAETSLNGKGTVGNQWA. 3 disordered regions span residues 353–379, 400–426, and 463–565; these read NSEGQTNAETSLNGKGTVGNQWASPPE, LESKFNGTGGGQTDSEKEQIMESVSSH, and SVDS…CNSG. A compositionally biased stretch (polar residues) spans 502–511; sequence KANSPASSRL. A compositionally biased stretch (basic and acidic residues) spans 516 to 535; that stretch reads DSSHLSKHVNFDKNPDHSEA.

This is an uncharacterized protein from Mus musculus (Mouse).